The primary structure comprises 323 residues: Serine/threonine-protein phosphatase PP1-gamma catalytic subunit (323 aa).

Ala-2 carries the post-translational modification N-acetylalanine. Mn(2+) contacts are provided by Asp-64, His-66, Asp-92, and Asn-124. His-125 functions as the Proton donor in the catalytic mechanism. Mn(2+) is bound by residues His-173 and His-248. The segment at 302–323 (KKPNATRPVTPPRGMITKQAKK) is disordered. 2 positions are modified to phosphothreonine: Thr-307 and Thr-311.

It belongs to the PPP phosphatase family. PP-1 subfamily. In terms of assembly, PP1 comprises a catalytic subunit, PPP1CA, PPP1CB or PPP1CC, which is folded into its native form by inhibitor 2 and glycogen synthetase kinase 3, and then complexed to one or several targeting or regulatory subunits. PPP1R12A, PPP1R12B and PPP1R12C mediate binding to myosin. PPP1R3A (in skeletal muscle), PPP1R3B (in sliver), PPP1R3C, PPP1R3D and PPP1R3F (in brain) mediate binding to glycogen. PPP1R15A and PPP1R15B mediate binding to EIF2S1. Part of a complex containing PPP1R15B, PP1 and NCK1/2. Interacts with PPP1R3B, PPP1R7 and CDCA2. Isoform 2 interacts with SPZ1. Interacts with IKFZ1; the interaction targets PPP1CC to pericentromeric heterochromatin, dephosphorylates IKAROS, stabilizes it and prevents it from degradation. Interacts with NOM1 and PPP1R8. Component of the PTW/PP1 phosphatase complex, composed of PPP1R10/PNUTS, TOX4, WDR82, and PPP1CA or PPP1CB or PPP1CC. Interacts with PPP1R8. Interacts with NEK2. Interacts with URI1; the interaction is phosphorylation-dependent and occurs in a growth factor-dependent manner. Interacts with FOXP3. Interacts with TMEM225 (via RVxF motif). Interacts with MKI67. Interacts with RRP1B; this targets PPP1CC to the nucleolus. Found in a complex with PPP1CA, PPP1CC, SHC1 and PEAK1. Interacts with DYNLT4. Interacts (via RVxF motif) with FIRRM; regulates PLK1 kinase activity. Interacts with the KNL1 complex subunit KNL1; the interaction is direct and mutually exclusive with KNL1 binding to microtubules. Component of the SHOC2-MRAS-PP1c (SMP) complex consisting of SHOC2, GTP-bound M-Ras/MRAS and the catalytic subunit of protein phosphatase 1 (either PPP1CA, PPP1CB or PPP1CC). SHOC2 and PP1c preferably bind M-Ras/MRAS, but they also bind K-Ras/KRAS, N-Ras/NRAS and H-Ras/HRAS; these interactions are GTP-dependent and both SHOC2 and PP1c are required to form a stable complex. Interacts with SHOC2 in the absence of Ras GTPases. It depends on Mn(2+) as a cofactor. Phosphorylated by NEK2. Isoform 2 is expressed only in testis, in the late spermatocytes and early spematids (at protein level).

It is found in the cytoplasm. The protein resides in the nucleus. Its subcellular location is the cleavage furrow. It localises to the nucleolus. The protein localises to the nucleoplasm. It is found in the chromosome. The protein resides in the centromere. Its subcellular location is the kinetochore. It localises to the nucleus speckle. The protein localises to the midbody. It is found in the mitochondrion. The protein resides in the cytoskeleton. Its subcellular location is the microtubule organizing center. The catalysed reaction is O-phospho-L-seryl-[protein] + H2O = L-seryl-[protein] + phosphate. It catalyses the reaction O-phospho-L-threonyl-[protein] + H2O = L-threonyl-[protein] + phosphate. With respect to regulation, inactivated by binding to URI1. In terms of biological role, protein phosphatase that associates with over 200 regulatory proteins to form highly specific holoenzymes which dephosphorylate hundreds of biological targets. Protein phosphatase 1 (PP1) is essential for cell division, and participates in the regulation of glycogen metabolism, muscle contractility and protein synthesis. Dephosphorylates RPS6KB1. Involved in regulation of ionic conductances and long-term synaptic plasticity. May play an important role in dephosphorylating substrates such as the postsynaptic density-associated Ca(2+)/calmodulin dependent protein kinase II. Component of the PTW/PP1 phosphatase complex, which plays a role in the control of chromatin structure and cell cycle progression during the transition from mitosis into interphase. In balance with CSNK1D and CSNK1E, determines the circadian period length, through the regulation of the speed and rhythmicity of PER1 and PER2 phosphorylation. May dephosphorylate CSNK1D and CSNK1E. Regulates the recruitment of the SKA complex to kinetochores. Core component of the SHOC2-MRAS-PP1c (SMP) holophosphatase complex that regulates the MAPK pathway activation. Dephosphorylates MKI67 at the onset of anaphase. The SMP complex specifically dephosphorylates the inhibitory phosphorylation at 'Ser-259' of RAF1 kinase, 'Ser-365' of BRAF kinase and 'Ser-214' of ARAF kinase, stimulating their kinase activities. The SMP complex enhances the dephosphorylation activity and substrate specificity of PP1c. Required for normal male fertility. The chain is Serine/threonine-protein phosphatase PP1-gamma catalytic subunit (Ppp1cc) from Rattus norvegicus (Rat).